The chain runs to 96 residues: Protein RnfH (96 aa).

It belongs to the UPF0125 (RnfH) family.

The sequence is that of Protein RnfH from Cronobacter sakazakii (strain ATCC BAA-894) (Enterobacter sakazakii).